Reading from the N-terminus, the 186-residue chain is MSSNNVVIKIAQPYAVALLDLAKTKKVTEKVSQDIQSIQNILAQSDKLKIFLANPLKTVEAKKEVIIATVGDQINENTLSFLMILVDRKRIGMLDAIASKYLELAYQMESLTIANINTSIALSPDQETLLTEKIKVMTKAKEVKLIISVEPELIGGFTIQIGSKVIDTSIRGQLRQMASHLDVVVT.

This sequence belongs to the ATPase delta chain family. As to quaternary structure, F-type ATPases have 2 components, F(1) - the catalytic core - and F(0) - the membrane proton channel. F(1) has five subunits: alpha(3), beta(3), gamma(1), delta(1), epsilon(1). CF(0) has four main subunits: a(1), b(1), b'(1) and c(10-14). The alpha and beta chains form an alternating ring which encloses part of the gamma chain. F(1) is attached to F(0) by a central stalk formed by the gamma and epsilon chains, while a peripheral stalk is formed by the delta, b and b' chains.

It localises to the plastid. The protein resides in the chloroplast thylakoid membrane. Functionally, f(1)F(0) ATP synthase produces ATP from ADP in the presence of a proton or sodium gradient. F-type ATPases consist of two structural domains, F(1) containing the extramembraneous catalytic core and F(0) containing the membrane proton channel, linked together by a central stalk and a peripheral stalk. During catalysis, ATP synthesis in the catalytic domain of F(1) is coupled via a rotary mechanism of the central stalk subunits to proton translocation. Its function is as follows. This protein is part of the stalk that links CF(0) to CF(1). It either transmits conformational changes from CF(0) to CF(1) or is implicated in proton conduction. In Pyropia yezoensis (Susabi-nori), this protein is ATP synthase subunit delta, chloroplastic.